The primary structure comprises 400 residues: Large envelope protein (400 aa).

The residue at position 1 (Met-1) is an N-acetylmethionine. 2 disordered regions span residues 1-50 and 84-116; these read MGGW…PHKD and ILTSVPAAPPPASTNRQSGRQPTPLSPPLRDTH. Residue Gly-2 is the site of N-myristoyl glycine; by host attachment. The tract at residues 2–119 is pre-S1; that stretch reads GGWSSKPRKG…PPLRDTHPQA (118 aa). Residues 2-174 are pre-S; the sequence is GGWSSKPRKG…LSTTGDPVPN (173 aa). At 2-181 the chain is on the virion surface; in external conformation side; it reads GGWSSKPRKG…VPNMENIASG (180 aa). Residues 2–253 lie on the Intravirion; in internal conformation side of the membrane; sequence GGWSSKPRKG…PGYRWMYLRR (252 aa). The N-linked (GlcNAc...) asparagine glycan is linked to Trp-4. The span at 96–106 shows a compositional bias: polar residues; it reads STNRQSGRQPT. The interval 120–174 is pre-S2; the sequence is MQWNSTTFHQTLQDPRVRALYLPAGGSSSGTVSPAQNTVSAISSILSTTGDPVPN. The helical transmembrane segment at 182 to 202 threads the bilayer; sequence LLGPLLVLQAGFFSLTKILTI. The Intravirion; in external conformation segment spans residues 203–253; sequence PQSLDSWWTSLSFLGGTPVCLGQNSQSPISSHSPTCCPPICPGYRWMYLRR. Residues 254-274 traverse the membrane as a helical segment; it reads FIIXLCILLLCLIFLLVLLDY. Topologically, residues 275–348 are virion surface; sequence QGMLPVCPLI…WASVRFSWLS (74 aa). The N-linked (GlcNAc...) asparagine; by host glycan is linked to Asn-320. Residues 349 to 369 traverse the membrane as a helical segment; the sequence is LLVPFVQWFVGLSPTVWLSVI. Topologically, residues 370–375 are intravirion; that stretch reads WMMWYW. The helical transmembrane segment at 376–398 threads the bilayer; it reads GPSLYNILSPFMPLLPIFFCLWV. Topologically, residues 399 to 400 are virion surface; sequence YI.

It belongs to the orthohepadnavirus major surface antigen family. Interacts (via its myristoylated pre-S1 region) with the host SLC10A1/NTCP; this interaction is essential for viral entry. In terms of assembly, in its internal form (Li-HBsAg), interacts with the capsid protein and with the isoform S. Interacts with host chaperone CANX. As to quaternary structure, associates with host chaperone CANX through its pre-S2 N glycan; this association may be essential for isoform M proper secretion. Interacts with isoform L. Interacts with the antigens of satellite virus HDV (HDVAgs); this interaction is required for encapsidation of HDV genomic RNA. Isoform M is N-terminally acetylated by host at a ratio of 90%, and N-glycosylated by host at the pre-S2 region. Post-translationally, myristoylated; this modification is essential for its interaction with the host protein SLC10A1/NTCP.

The protein localises to the virion membrane. Functionally, the large envelope protein exists in two topological conformations, one which is termed 'external' or Le-HBsAg and the other 'internal' or Li-HBsAg. In its external conformation the protein attaches the virus to cell receptors and thereby initiating infection. This interaction determines the species specificity and liver tropism. This attachment induces virion internalization predominantly through caveolin-mediated endocytosis. The large envelope protein also assures fusion between virion membrane and endosomal membrane. In its internal conformation the protein plays a role in virion morphogenesis and mediates the contact with the nucleocapsid like a matrix protein. The middle envelope protein plays an important role in the budding of the virion. It is involved in the induction of budding in a nucleocapsid independent way. In this process the majority of envelope proteins bud to form subviral lipoprotein particles of 22 nm of diameter that do not contain a nucleocapsid. This is Large envelope protein from Hepatitis B virus genotype B1 (isolate Japan/Ry30/2002) (HBV-B).